The chain runs to 548 residues: Membrane protein insertase YidC (548 aa).

A helical transmembrane segment spans residues 6–26; it reads NLLIIALLFVSFMIWQAWEQD. The segment at 28–52 is disordered; the sequence is NPQPQQQTTQTTTTAAGSAADQGVP. The span at 29–41 shows a compositional bias: low complexity; it reads PQPQQQTTQTTTT. Transmembrane regions (helical) follow at residues 345 to 365, 420 to 440, 458 to 478, and 499 to 519; these read KFIH…TFIV, LGGC…YYML, LSAQ…MFFI, and PVIF…YYIV.

It belongs to the OXA1/ALB3/YidC family. Type 1 subfamily. Interacts with the Sec translocase complex via SecD. Specifically interacts with transmembrane segments of nascent integral membrane proteins during membrane integration.

It is found in the cell inner membrane. In terms of biological role, required for the insertion and/or proper folding and/or complex formation of integral membrane proteins into the membrane. Involved in integration of membrane proteins that insert both dependently and independently of the Sec translocase complex, as well as at least some lipoproteins. Aids folding of multispanning membrane proteins. The chain is Membrane protein insertase YidC from Klebsiella pneumoniae (strain 342).